Reading from the N-terminus, the 81-residue chain is Small ribosomal subunit protein bS16 (81 aa).

It belongs to the bacterial ribosomal protein bS16 family.

The chain is Small ribosomal subunit protein bS16 from Agathobacter rectalis (strain ATCC 33656 / DSM 3377 / JCM 17463 / KCTC 5835 / VPI 0990) (Eubacterium rectale).